The following is a 492-amino-acid chain: Aerolysin-4 (492 aa).

The signal sequence occupies residues Met-1–Ala-23. Disulfide bonds link Cys-42–Cys-98 and Cys-182–Cys-187. The interval Trp-68–Tyr-84 is interaction with host N-linked glycan. The interval Tyr-256–Trp-288 is part of the transmembrane beta-barrel after proteolytic activation of the toxin and insertion into the host membrane. An interaction with glycans from host GPI-anchor region spans residues Arg-346–His-355. Residues Ala-446–Gln-492 constitute a propeptide that is removed on maturation.

Belongs to the aerolysin family. As to quaternary structure, homodimer in solution; homoheptamer in the host membrane. After binding to GPI-anchored proteins in target membranes and proteolytic removal of the C-terminal propeptide, the protein assembles into a heptameric pre-pore complex. A further conformation change leads to insertion into the host membrane. Post-translationally, proteolytic cleavage and subsequent release of the propeptide trigger a major conformation change, leading to the formation of a heptameric pre-pore that then inserts into the host membrane.

The protein localises to the secreted. It is found in the host cell membrane. Its function is as follows. Secreted, cytolytic toxin that forms pores in host membranes after proteolytic removal of a C-terminal propeptide, leading to destruction of the membrane permeability barrier and cell death. The pores are formed by transmembrane beta-strands and are approximately 3 nm in diameter. The chain is Aerolysin-4 (ahh4) from Aeromonas hydrophila.